The chain runs to 301 residues: NAD kinase (301 aa).

Aspartate 81 serves as the catalytic Proton acceptor. NAD(+) contacts are provided by residues 81–82 (DG), 155–156 (NE), histidine 166, arginine 183, aspartate 185, 196–201 (TAYSLS), and glutamine 256.

The protein belongs to the NAD kinase family. The cofactor is a divalent metal cation.

It localises to the cytoplasm. It carries out the reaction NAD(+) + ATP = ADP + NADP(+) + H(+). Functionally, involved in the regulation of the intracellular balance of NAD and NADP, and is a key enzyme in the biosynthesis of NADP. Catalyzes specifically the phosphorylation on 2'-hydroxyl of the adenosine moiety of NAD to yield NADP. In Mannheimia succiniciproducens (strain KCTC 0769BP / MBEL55E), this protein is NAD kinase.